The chain runs to 246 residues: Probable transcriptional regulatory protein KPK_1906 (246 aa).

Belongs to the TACO1 family.

Its subcellular location is the cytoplasm. The polypeptide is Probable transcriptional regulatory protein KPK_1906 (Klebsiella pneumoniae (strain 342)).